A 292-amino-acid polypeptide reads, in one-letter code: Inhibitory synaptic factor 1 (292 aa).

Disordered regions lie at residues 1 to 25 (MNIR…RERI), 122 to 186 (SDSV…ERVR), and 198 to 292 (CDDE…KGKN). Positions 23 to 63 (ERIRQRMKMVIGQLEDILRELKEVAKELREVVSQIDKLTSD) form a coiled coil. Over residues 198 to 214 (CDDEEGDGEEEAAEEEG) the composition is skewed to acidic residues. A compositionally biased stretch (polar residues) spans 263–285 (RNSSTQTVSDKSTQTVLPYTATR).

Belongs to the INSYN1 family. As to quaternary structure, interacts with GPHN.

It localises to the postsynaptic density. Component of the protein machinery at the inhibitory synapses, probably acting as a scaffold. Inhibitory synapses dampen neuronal activity through postsynaptic hyperpolarization. This synaptic inhibition is fundamental for the functioning of the central nervous system, shaping and orchestrating the flow of information through neuronal networks to generate a precise neural code. The sequence is that of Inhibitory synaptic factor 1 from Bos taurus (Bovine).